The sequence spans 307 residues: tRNA-cytidine(32) 2-sulfurtransferase (307 aa).

Residues 44 to 49 (SGGKDS) carry the PP-loop motif motif. [4Fe-4S] cluster-binding residues include cysteine 119, cysteine 122, and cysteine 210.

The protein belongs to the TtcA family. In terms of assembly, homodimer. Mg(2+) serves as cofactor. It depends on [4Fe-4S] cluster as a cofactor.

It localises to the cytoplasm. It carries out the reaction cytidine(32) in tRNA + S-sulfanyl-L-cysteinyl-[cysteine desulfurase] + AH2 + ATP = 2-thiocytidine(32) in tRNA + L-cysteinyl-[cysteine desulfurase] + A + AMP + diphosphate + H(+). It functions in the pathway tRNA modification. In terms of biological role, catalyzes the ATP-dependent 2-thiolation of cytidine in position 32 of tRNA, to form 2-thiocytidine (s(2)C32). The sulfur atoms are provided by the cysteine/cysteine desulfurase (IscS) system. The polypeptide is tRNA-cytidine(32) 2-sulfurtransferase (Aliivibrio fischeri (strain ATCC 700601 / ES114) (Vibrio fischeri)).